The chain runs to 371 residues: tRNA-specific 2-thiouridylase MnmA (371 aa).

ATP contacts are provided by residues A24–S31 and L50. Catalysis depends on C120, which acts as the Nucleophile. C120 and C216 are joined by a disulfide. Residue G144 participates in ATP binding. Residues K166–Q168 are interaction with tRNA. C216 acts as the Cysteine persulfide intermediate in catalysis.

This sequence belongs to the MnmA/TRMU family.

The protein resides in the cytoplasm. The catalysed reaction is S-sulfanyl-L-cysteinyl-[protein] + uridine(34) in tRNA + AH2 + ATP = 2-thiouridine(34) in tRNA + L-cysteinyl-[protein] + A + AMP + diphosphate + H(+). Catalyzes the 2-thiolation of uridine at the wobble position (U34) of tRNA, leading to the formation of s(2)U34. This chain is tRNA-specific 2-thiouridylase MnmA, found in Wolbachia sp. subsp. Brugia malayi (strain TRS).